Here is a 519-residue protein sequence, read N- to C-terminus: Membrane protein insertase YidC (519 aa).

Helical transmembrane passes span 6–26, 298–318, 324–344, 390–410, 434–454, and 471–491; these read ILFV…FAQP, VDFG…VFFY, YGWA…PLTL, LGGC…FTML, FMQF…IGMF, and IMYI…SGLV.

This sequence belongs to the OXA1/ALB3/YidC family. Type 1 subfamily. In terms of assembly, interacts with the Sec translocase complex via SecD. Specifically interacts with transmembrane segments of nascent integral membrane proteins during membrane integration.

Its subcellular location is the cell inner membrane. In terms of biological role, required for the insertion and/or proper folding and/or complex formation of integral membrane proteins into the membrane. Involved in integration of membrane proteins that insert both dependently and independently of the Sec translocase complex, as well as at least some lipoproteins. Aids folding of multispanning membrane proteins. The sequence is that of Membrane protein insertase YidC from Endomicrobium trichonymphae.